Reading from the N-terminus, the 466-residue chain is Cysteine--tRNA ligase (466 aa).

Cysteine 29 lines the Zn(2+) pocket. Residues 31–41 carry the 'HIGH' region motif; it reads PTVYNYIHIGN. Cysteine 209, histidine 234, and glutamate 238 together coordinate Zn(2+). Positions 266–270 match the 'KMSKS' region motif; that stretch reads KMSKS. Lysine 269 contributes to the ATP binding site. A Phosphoserine modification is found at serine 270.

This sequence belongs to the class-I aminoacyl-tRNA synthetase family. As to quaternary structure, monomer. It depends on Zn(2+) as a cofactor.

It is found in the cytoplasm. The enzyme catalyses tRNA(Cys) + L-cysteine + ATP = L-cysteinyl-tRNA(Cys) + AMP + diphosphate. This Bacillus velezensis (strain DSM 23117 / BGSC 10A6 / LMG 26770 / FZB42) (Bacillus amyloliquefaciens subsp. plantarum) protein is Cysteine--tRNA ligase.